We begin with the raw amino-acid sequence, 99 residues long: Aspartyl/glutamyl-tRNA(Asn/Gln) amidotransferase subunit C (99 aa).

The protein belongs to the GatC family. Heterotrimer of A, B and C subunits.

The catalysed reaction is L-glutamyl-tRNA(Gln) + L-glutamine + ATP + H2O = L-glutaminyl-tRNA(Gln) + L-glutamate + ADP + phosphate + H(+). The enzyme catalyses L-aspartyl-tRNA(Asn) + L-glutamine + ATP + H2O = L-asparaginyl-tRNA(Asn) + L-glutamate + ADP + phosphate + 2 H(+). Allows the formation of correctly charged Asn-tRNA(Asn) or Gln-tRNA(Gln) through the transamidation of misacylated Asp-tRNA(Asn) or Glu-tRNA(Gln) in organisms which lack either or both of asparaginyl-tRNA or glutaminyl-tRNA synthetases. The reaction takes place in the presence of glutamine and ATP through an activated phospho-Asp-tRNA(Asn) or phospho-Glu-tRNA(Gln). This Bifidobacterium longum (strain NCC 2705) protein is Aspartyl/glutamyl-tRNA(Asn/Gln) amidotransferase subunit C.